A 555-amino-acid polypeptide reads, in one-letter code: Gamma-aminobutyric acid receptor subunit alpha-4 (555 aa).

Residues 1 to 35 form the signal peptide; the sequence is MVSAKKVPAIAMSFGVSFALLHFLCLAACLNESPG. Residues 36-259 are Extracellular-facing; sequence QNQKEEKLCP…FHLRRKMGYF (224 aa). An N-linked (GlcNAc...) asparagine glycan is attached at Asn-47. Position 100 (Arg-100) interacts with 4-aminobutanoate. Asn-144 and Asn-157 each carry an N-linked (GlcNAc...) asparagine glycan. Thr-163 provides a ligand contact to 4-aminobutanoate. A disulfide bridge connects residues Cys-172 and Cys-186. The helical transmembrane segment at 260–280 threads the bilayer; sequence MIQTYIPCIMTVILSQVSFWI. The Cytoplasmic segment spans residues 281–284; sequence NKES. A helical transmembrane segment spans residues 285 to 305; the sequence is VPARTVFGITTVLTMTTLSIS. The Extracellular segment spans residues 306-318; the sequence is ARHSLPKVSYATA. A helical membrane pass occupies residues 319 to 341; sequence MDWFIAVCFAFVFSALIEFAAVN. At 342–518 the chain is on the cytoplasmic side; that stretch reads YFTNVQMEKA…PPPSGSGTSK (177 aa). 2 disordered regions span residues 354-435 and 495-516; these read KTSK…SPNP and GTSGKLSATTTPSAPPPSGSGT. The segment covering 410 to 421 has biased composition (low complexity); that stretch reads SSKSSTVVQGSS. Over residues 422-435 the composition is skewed to polar residues; that stretch reads EATPQSYLASSPNP. A helical transmembrane segment spans residues 519 to 545; sequence IDKYARILFPVTFGAFNMVYWVVYLSK. Residues 546–555 are Extracellular-facing; sequence DTMEKSESLM.

This sequence belongs to the ligand-gated ion channel (TC 1.A.9) family. Gamma-aminobutyric acid receptor (TC 1.A.9.5) subfamily. GABRA4 sub-subfamily. In terms of assembly, heteropentamer, formed by a combination of alpha (GABRA1-6), beta (GABRB1-3), gamma (GABRG1-3), delta (GABRD), epsilon (GABRE), rho (GABRR1-3), pi (GABRP) and theta (GABRQ) chains, each subunit exhibiting distinct physiological and pharmacological properties. As to expression, expressed in the brain.

It is found in the cell membrane. The protein localises to the postsynaptic cell membrane. The catalysed reaction is chloride(in) = chloride(out). Potentiated by histamine. Functionally, alpha subunit of the heteropentameric ligand-gated chloride channel gated by gamma-aminobutyric acid (GABA), a major inhibitory neurotransmitter in the brain. GABA-gated chloride channels, also named GABA(A) receptors (GABAAR), consist of five subunits arranged around a central pore and contain GABA active binding site(s) located at the alpha and beta subunit interface(s). When activated by GABA, GABAARs selectively allow the flow of chloride anions across the cell membrane down their electrochemical gradient. GABAARs containing alpha-4 are predominantly extrasynaptic, contributing to tonic inhibition in dentate granule cells and thalamic relay neurons. Extrasynaptic alpha-4-containing GABAARs control levels of excitability and network activity. GABAARs containing alpha-4 are often found with the delta or gamma-2 subunits, in combination with beta subunits. GABAAR containing alpha-4-beta-3-delta subunits can simultaneously bind GABA and histamine where histamine binds at the interface of two neighboring beta subunits, which may be involved in the regulation of sleep and wakefulness. This Bos taurus (Bovine) protein is Gamma-aminobutyric acid receptor subunit alpha-4 (GABRA4).